The primary structure comprises 376 residues: Erythronate-4-phosphate dehydrogenase (376 aa).

Residues serine 45 and threonine 67 each contribute to the substrate site. Aspartate 147 lines the NAD(+) pocket. Residue arginine 209 is part of the active site. Aspartate 233 lines the NAD(+) pocket. The active site involves glutamate 238. The Proton donor role is filled by histidine 255. Position 258 (glycine 258) interacts with NAD(+). Tyrosine 259 lines the substrate pocket.

Belongs to the D-isomer specific 2-hydroxyacid dehydrogenase family. PdxB subfamily. Homodimer.

It is found in the cytoplasm. It carries out the reaction 4-phospho-D-erythronate + NAD(+) = (R)-3-hydroxy-2-oxo-4-phosphooxybutanoate + NADH + H(+). It participates in cofactor biosynthesis; pyridoxine 5'-phosphate biosynthesis; pyridoxine 5'-phosphate from D-erythrose 4-phosphate: step 2/5. In terms of biological role, catalyzes the oxidation of erythronate-4-phosphate to 3-hydroxy-2-oxo-4-phosphonooxybutanoate. The sequence is that of Erythronate-4-phosphate dehydrogenase from Shewanella loihica (strain ATCC BAA-1088 / PV-4).